An 823-amino-acid chain; its full sequence is Putative ankyrin repeat domain-containing protein 20A3 (823 aa).

ANK repeat units follow at residues 66 to 95 (QHRT…QIDV), 99 to 128 (ENRT…NPNL), 132 to 161 (YGNT…HIEA), 165 to 194 (DNNT…SSHA), and 198 to 227 (LRRS…DVFA). Disordered stretches follow at residues 301 to 343 (VPEK…EVED) and 355 to 402 (VQTL…LSEN). Basic and acidic residues predominate over residues 372-384 (QERHERSEKKQPQ). 3 coiled-coil regions span residues 431–480 (KKLK…KQLE), 571–724 (AFRY…NNST), and 776–805 (LVLE…EKTE).

The polypeptide is Putative ankyrin repeat domain-containing protein 20A3 (Homo sapiens (Human)).